The following is a 195-amino-acid chain: Imidazole glycerol phosphate synthase subunit HisH (195 aa).

The 193-residue stretch at 1–193 (MIAIVDYGVG…RETTCNSTQQ (193 aa)) folds into the Glutamine amidotransferase type-1 domain. The active-site Nucleophile is cysteine 78. Residues histidine 168 and glutamate 170 contribute to the active site.

In terms of assembly, heterodimer of HisH and HisF.

The protein resides in the cytoplasm. It carries out the reaction 5-[(5-phospho-1-deoxy-D-ribulos-1-ylimino)methylamino]-1-(5-phospho-beta-D-ribosyl)imidazole-4-carboxamide + L-glutamine = D-erythro-1-(imidazol-4-yl)glycerol 3-phosphate + 5-amino-1-(5-phospho-beta-D-ribosyl)imidazole-4-carboxamide + L-glutamate + H(+). It catalyses the reaction L-glutamine + H2O = L-glutamate + NH4(+). Its pathway is amino-acid biosynthesis; L-histidine biosynthesis; L-histidine from 5-phospho-alpha-D-ribose 1-diphosphate: step 5/9. In terms of biological role, IGPS catalyzes the conversion of PRFAR and glutamine to IGP, AICAR and glutamate. The HisH subunit catalyzes the hydrolysis of glutamine to glutamate and ammonia as part of the synthesis of IGP and AICAR. The resulting ammonia molecule is channeled to the active site of HisF. In Exiguobacterium sibiricum (strain DSM 17290 / CCUG 55495 / CIP 109462 / JCM 13490 / 255-15), this protein is Imidazole glycerol phosphate synthase subunit HisH.